The chain runs to 485 residues: Glutamyl-tRNA(Gln) amidotransferase subunit A (485 aa).

Active-site charge relay system residues include lysine 76 and serine 151. Serine 175 acts as the Acyl-ester intermediate in catalysis.

It belongs to the amidase family. GatA subfamily. In terms of assembly, heterotrimer of A, B and C subunits.

It carries out the reaction L-glutamyl-tRNA(Gln) + L-glutamine + ATP + H2O = L-glutaminyl-tRNA(Gln) + L-glutamate + ADP + phosphate + H(+). Its function is as follows. Allows the formation of correctly charged Gln-tRNA(Gln) through the transamidation of misacylated Glu-tRNA(Gln) in organisms which lack glutaminyl-tRNA synthetase. The reaction takes place in the presence of glutamine and ATP through an activated gamma-phospho-Glu-tRNA(Gln). This is Glutamyl-tRNA(Gln) amidotransferase subunit A from Chlorobium luteolum (strain DSM 273 / BCRC 81028 / 2530) (Pelodictyon luteolum).